A 211-amino-acid chain; its full sequence is Calcipressin-like protein (211 aa).

2 positions are modified to phosphoserine: Ser-113 and Ser-117. Residue Thr-182 is modified to Phosphothreonine.

The protein belongs to the RCAN family.

Functionally, inhibits calcineurin-dependent transcriptional responses by binding to the catalytic domain of calcineurin. The protein is Calcipressin-like protein (RCN1) of Saccharomyces cerevisiae (strain ATCC 204508 / S288c) (Baker's yeast).